A 38-amino-acid polypeptide reads, in one-letter code: Trypsin inhibitor DE5 beta chain (38 aa).

The protein belongs to the protease inhibitor I3 (leguminous Kunitz-type inhibitor) family. In terms of assembly, heterodimer of an alpha and a beta chain linked by a disulfide bond.

In terms of biological role, inhibition of trypsin. The polypeptide is Trypsin inhibitor DE5 beta chain (Adenanthera pavonina (Sandal bead tree)).